We begin with the raw amino-acid sequence, 242 residues long: GLIPR1-like protein 1 (242 aa).

The first 22 residues, 1–22 (MALKNKFSCLWILGLCLVATTS), serve as a signal peptide directing secretion. The SCP domain maps to 39 to 171 (EAHNEWRGKV…ASTAIFVCNY (133 aa)). A glycan (N-linked (GlcNAc...) asparagine) is linked at N119. Residue G221 is the site of GPI-anchor amidated glycine attachment. The propeptide at 222–242 (RAPQQTAFNPFSLGFLLLRIF) is removed in mature form.

This sequence belongs to the CRISP family. In terms of assembly, part of a oolemmal binding multimeric complex (IZUMO1 complex) composed at least of IZUMO1 and GLIPR1L1; the complex assemblage is influenced by the maturation status of the male germ cell. Interacts with IZUMO1. N-glycosylated. N-glycosylation decreases during the transit in the caput. Highly expressed in testis.

Its subcellular location is the cytoplasmic vesicle. The protein resides in the secretory vesicle. It localises to the acrosome. The protein localises to the cell membrane. It is found in the membrane raft. Its subcellular location is the secreted. In terms of biological role, required for optimal fertilization at the stage of sperm-oocyte fusion, plays a role in optimizing acrosome function, the translocation of IZUMO1 during the acrosome reaction and the fertilization process. Component of epididymosomes, one type of membranous microvesicules which mediate the transfer of lipids and proteins to spermatozoa plasma membrane during epididymal maturation. Also component of the CD9-positive microvesicules found in the cauda region. The protein is GLIPR1-like protein 1 (GLIPR1L1) of Homo sapiens (Human).